We begin with the raw amino-acid sequence, 236 residues long: tRNA1(Val) (adenine(37)-N6)-methyltransferase (236 aa).

The protein belongs to the methyltransferase superfamily. tRNA (adenine-N(6)-)-methyltransferase family.

It is found in the cytoplasm. The enzyme catalyses adenosine(37) in tRNA1(Val) + S-adenosyl-L-methionine = N(6)-methyladenosine(37) in tRNA1(Val) + S-adenosyl-L-homocysteine + H(+). Functionally, specifically methylates the adenine in position 37 of tRNA(1)(Val) (anticodon cmo5UAC). In Histophilus somni (strain 2336) (Haemophilus somnus), this protein is tRNA1(Val) (adenine(37)-N6)-methyltransferase.